The sequence spans 338 residues: Glycerol-3-phosphate dehydrogenase [NAD(P)+] (338 aa).

NADPH-binding residues include Ser15, Tyr16, His36, and Lys110. Lys110, Gly139, and Thr141 together coordinate sn-glycerol 3-phosphate. An NADPH-binding site is contributed by Ala143. Sn-glycerol 3-phosphate contacts are provided by Lys195, Asp248, Ser258, Arg259, and Asn260. Lys195 acts as the Proton acceptor in catalysis. Residue Arg259 coordinates NADPH. The NADPH site is built by Val283 and Glu285.

This sequence belongs to the NAD-dependent glycerol-3-phosphate dehydrogenase family.

Its subcellular location is the cytoplasm. It carries out the reaction sn-glycerol 3-phosphate + NAD(+) = dihydroxyacetone phosphate + NADH + H(+). It catalyses the reaction sn-glycerol 3-phosphate + NADP(+) = dihydroxyacetone phosphate + NADPH + H(+). The protein operates within membrane lipid metabolism; glycerophospholipid metabolism. Its function is as follows. Catalyzes the reduction of the glycolytic intermediate dihydroxyacetone phosphate (DHAP) to sn-glycerol 3-phosphate (G3P), the key precursor for phospholipid synthesis. This Edwardsiella ictaluri (strain 93-146) protein is Glycerol-3-phosphate dehydrogenase [NAD(P)+].